The chain runs to 289 residues: 5'-adenylylsulfate reductase-like 7 (289 aa).

The N-terminal stretch at 1–23 (MNLWVSIFLVSAIAGSCLPSGFA) is a signal peptide. The Thioredoxin domain maps to 37–157 (SVIEQKCPRS…LIQFYKETTG (121 aa)). N-linked (GlcNAc...) asparagine glycosylation is found at Asn132 and Asn184. Residues 198–218 (MVLALMFLSLKLAILIFPIMG) form a helical membrane-spanning segment.

Its subcellular location is the membrane. The chain is 5'-adenylylsulfate reductase-like 7 (APRL7) from Arabidopsis thaliana (Mouse-ear cress).